The chain runs to 441 residues: Ribulose bisphosphate carboxylase large chain (441 aa).

2 residues coordinate substrate: asparagine 89 and threonine 139. Lysine 141 acts as the Proton acceptor in catalysis. Substrate is bound at residue lysine 143. Mg(2+) is bound by residues lysine 167, aspartate 169, and glutamate 170. At lysine 167 the chain carries N6-carboxylysine. Residue histidine 260 is the Proton acceptor of the active site. 2 residues coordinate substrate: residue 261 and serine 345.

It belongs to the RuBisCO large chain family. Type I subfamily. Heterohexadecamer of 8 large chains and 8 small chains; disulfide-linked. The disulfide link is formed within the large subunit homodimers. Requires Mg(2+) as cofactor. The disulfide bond which can form in the large chain dimeric partners within the hexadecamer appears to be associated with oxidative stress and protein turnover.

It is found in the plastid. Its subcellular location is the chloroplast. The catalysed reaction is 2 (2R)-3-phosphoglycerate + 2 H(+) = D-ribulose 1,5-bisphosphate + CO2 + H2O. It carries out the reaction D-ribulose 1,5-bisphosphate + O2 = 2-phosphoglycolate + (2R)-3-phosphoglycerate + 2 H(+). Its function is as follows. RuBisCO catalyzes two reactions: the carboxylation of D-ribulose 1,5-bisphosphate, the primary event in carbon dioxide fixation, as well as the oxidative fragmentation of the pentose substrate in the photorespiration process. Both reactions occur simultaneously and in competition at the same active site. The protein is Ribulose bisphosphate carboxylase large chain of Asclepias exaltata (Poke milkweed).